The chain runs to 53 residues: ComX pheromone (53 aa).

Residues 1–46 (MQEMVGYLIKYPNVLREVMEGNACLLGVDKDQSECIINGFKGLEIY) constitute a propeptide that is removed on maturation. Trp51 is lipidated: 3'-geranyl-2',N2-cyclotryptophan.

Interacts directly with the sensor histidine kinase ComP and stimulates its activity. Post-translationally, trp-51 is modified by geranylation, which is essential for activity. Modified by the tryptophan prenyltransferase ComQ before export to the extracellular environment. The type of isoprenyl derivative differs among the different pherotypes and depends on ComX primary sequence.

It localises to the secreted. Its function is as follows. Part of a major quorum-sensing system that regulates the development of genetic competence. Acts through the activation of the two-component regulatory system ComP/ComA composed of a sensor histidine kinase, ComP, and a response regulator, ComA. This chain is ComX pheromone, found in Bacillus mojavensis.